The chain runs to 235 residues: Protein MAINTENANCE OF PSII UNDER HIGH LIGHT 1 (235 aa).

A helical transmembrane segment spans residues 127 to 147 (TAAIVAGIALIAVAAASSILL). The tract at residues 181–235 (QPSTPSVTEAPPVAELETSLPETPSVAQQETSLPETMASEAQPEASSVPTTSSTS) is disordered. Composition is skewed to polar residues over residues 200 to 214 (LPET…TSLP) and 224 to 235 (EASSVPTTSSTS).

As to quaternary structure, interacts with psbA, psbB, psbC and psbD.

The protein resides in the plastid. It localises to the chloroplast thylakoid membrane. In terms of biological role, interacts with photosystem II (PSII) core complexes and participates in the maintenance of normal PSII activity under photoinhibitory stress. May protect against photodamage or stabilize PSII under high-light stress. Participates in the maintainance of proper PSII function under high-light stress by protecting PSII from photooxidative damage. The polypeptide is Protein MAINTENANCE OF PSII UNDER HIGH LIGHT 1 (Arabidopsis thaliana (Mouse-ear cress)).